Here is a 61-residue protein sequence, read N- to C-terminus: Inner membrane protein p12 (61 aa).

The chain crosses the membrane as a helical span at residues 16–36; sequence LLIVAIIVVIMAIMLYYFWWM.

Belongs to the asfivirus inner membrane protein p12 family. As to quaternary structure, homomultimer; disulfide-linked. In terms of processing, not glycosylated.

It localises to the virion membrane. In Ornithodoros (relapsing fever ticks), this protein is Inner membrane protein p12.